Here is a 348-residue protein sequence, read N- to C-terminus: Dihydroorotate dehydrogenase (quinone) (348 aa).

Residues 65–69 and T89 contribute to the FMN site; that span reads AGMDK. Position 69 (K69) interacts with substrate. 114–118 provides a ligand contact to substrate; sequence NRMGF. FMN is bound by residues N143 and N176. N176 serves as a coordination point for substrate. The active-site Nucleophile is the S179. N181 is a binding site for substrate. Residues K221 and T249 each contribute to the FMN site. 250 to 251 serves as a coordination point for substrate; sequence NT. FMN contacts are provided by residues G272, G301, and 322–323; that span reads YT.

Belongs to the dihydroorotate dehydrogenase family. Type 2 subfamily. Monomer. The cofactor is FMN.

It is found in the cell membrane. The enzyme catalyses (S)-dihydroorotate + a quinone = orotate + a quinol. The protein operates within pyrimidine metabolism; UMP biosynthesis via de novo pathway; orotate from (S)-dihydroorotate (quinone route): step 1/1. Catalyzes the conversion of dihydroorotate to orotate with quinone as electron acceptor. The protein is Dihydroorotate dehydrogenase (quinone) of Akkermansia muciniphila (strain ATCC BAA-835 / DSM 22959 / JCM 33894 / BCRC 81048 / CCUG 64013 / CIP 107961 / Muc).